The following is a 462-amino-acid chain: Glycine--tRNA ligase (462 aa).

Substrate-binding residues include Arg-99 and Glu-174. Residues 206 to 208, 216 to 221, 290 to 291, and 334 to 337 each bind ATP; these read RNE, FRTREF, EL, and GADR. 221 to 225 is a substrate binding site; the sequence is FEQME. Residue 330–334 coordinates substrate; that stretch reads EPSLG.

This sequence belongs to the class-II aminoacyl-tRNA synthetase family. Homodimer.

The protein localises to the cytoplasm. The catalysed reaction is tRNA(Gly) + glycine + ATP = glycyl-tRNA(Gly) + AMP + diphosphate. In terms of biological role, catalyzes the attachment of glycine to tRNA(Gly). The polypeptide is Glycine--tRNA ligase (Macrococcus caseolyticus (strain JCSC5402) (Macrococcoides caseolyticum)).